The chain runs to 322 residues: Undecaprenyl-phosphate 4-deoxy-4-formamido-L-arabinose transferase (322 aa).

Residues 1 to 235 (MFEIHPVKKV…TCLTTTPLRM (235 aa)) are Cytoplasmic-facing. A helical membrane pass occupies residues 236-256 (LSLLGSIIAIGGFSIAVLLVI). The Periplasmic segment spans residues 257–269 (LRLTFGPQWAAEG). Residues 270–290 (VFMLFAVLFTFIGAQFIGMGL) form a helical membrane-spanning segment. At 291 to 322 (LGEYIGRIYTDVRARPRYFVQQVIRPSSKENE) the chain is on the cytoplasmic side.

This sequence belongs to the glycosyltransferase 2 family.

It is found in the cell inner membrane. The enzyme catalyses UDP-4-deoxy-4-formamido-beta-L-arabinose + di-trans,octa-cis-undecaprenyl phosphate = 4-deoxy-4-formamido-alpha-L-arabinopyranosyl di-trans,octa-cis-undecaprenyl phosphate + UDP. It participates in glycolipid biosynthesis; 4-amino-4-deoxy-alpha-L-arabinose undecaprenyl phosphate biosynthesis; 4-amino-4-deoxy-alpha-L-arabinose undecaprenyl phosphate from UDP-4-deoxy-4-formamido-beta-L-arabinose and undecaprenyl phosphate: step 1/2. It functions in the pathway bacterial outer membrane biogenesis; lipopolysaccharide biosynthesis. Catalyzes the transfer of 4-deoxy-4-formamido-L-arabinose from UDP to undecaprenyl phosphate. The modified arabinose is attached to lipid A and is required for resistance to polymyxin and cationic antimicrobial peptides. This Escherichia coli O45:K1 (strain S88 / ExPEC) protein is Undecaprenyl-phosphate 4-deoxy-4-formamido-L-arabinose transferase.